Reading from the N-terminus, the 959-residue chain is AP2-associated protein kinase 1 (959 aa).

Position 1 is an N-acetylmethionine (Met-1). Residues Met-1 to Gln-11 are compositionally biased toward basic and acidic residues. A disordered region spans residues Met-1–Ser-27. Phosphoserine is present on Ser-14. The span at Ser-14–Ser-27 shows a compositional bias: gly residues. Residues Val-46–Leu-315 form the Protein kinase domain. ATP contacts are provided by residues Leu-52–Val-60 and Lys-74. Asp-176 serves as the catalytic Proton acceptor. The residue at position 234 (Tyr-234) is a Phosphotyrosine. Ser-235 carries the post-translational modification Phosphoserine. The tract at residues Ser-340 to Gln-385 is disordered. A phosphothreonine mark is found at Thr-354 and Thr-389. Omega-N-methylarginine is present on Arg-391. Disordered regions lie at residues Pro-398 to Pro-514 and Thr-578 to His-630. The segment covering Gly-404–Lys-419 has biased composition (polar residues). Residues Ala-420–Gln-435 are compositionally biased toward low complexity. Thr-441 carries the post-translational modification Phosphothreonine. Composition is skewed to low complexity over residues Gln-444–Gln-481, Gln-494–Gln-510, and Thr-578–Thr-603. Thr-604 carries the post-translational modification Phosphothreonine. Polar residues predominate over residues Ile-609–Thr-625. Ser-616 bears the Phosphoserine mark. Thr-618 carries the phosphothreonine modification. Residues Ser-621, Ser-622, Ser-635, and Ser-648 each carry the phosphoserine modification. Thr-651 carries the phosphothreonine modification. 4 disordered regions span residues Ser-662–Asp-699, Gly-727–Ala-763, Pro-837–Leu-857, and Ile-923–Leu-943. A compositionally biased stretch (polar residues) spans Thr-670–Asn-694. Phosphoserine is present on Ser-729. 2 stretches are compositionally biased toward polar residues: residues Gln-738–Ala-752 and Leu-842–Leu-857. The tract at residues Asp-821 to Asp-958 is clathrin-binding domain (CBD). 3 positions are modified to phosphoserine: Ser-844, Ser-935, and Ser-936. The segment covering Gly-929 to Ser-942 has biased composition (low complexity).

It belongs to the protein kinase superfamily. Ser/Thr protein kinase family. As to quaternary structure, interacts (via CBD domain) with clathrin. Interacts with AP-2 complex. Interacts with NUMB. Interacts with alpha-adaptin. Interacts with EPS15 isoform 2. Interacts with membrane-bound activated NOTCH1 but not with the inactive full-length form of NOTCH1. Preferentially interacts with monoubiquitinated activated NOTCH1 compared to the non-ubiquitinated form. Post-translationally, autophosphorylated.

Its subcellular location is the cell membrane. The protein resides in the membrane. It localises to the clathrin-coated pit. It is found in the presynapse. The catalysed reaction is L-seryl-[protein] + ATP = O-phospho-L-seryl-[protein] + ADP + H(+). It carries out the reaction L-threonyl-[protein] + ATP = O-phospho-L-threonyl-[protein] + ADP + H(+). Its activity is regulated as follows. Stimulated by clathrin. Functionally, regulates clathrin-mediated endocytosis by phosphorylating the AP2M1/mu2 subunit of the adaptor protein complex 2 (AP-2) which ensures high affinity binding of AP-2 to cargo membrane proteins during the initial stages of endocytosis. Preferentially, may phosphorylate substrates on threonine residues. Regulates phosphorylation of other AP-2 subunits as well as AP-2 localization and AP-2-mediated internalization of ligand complexes. Phosphorylates NUMB and regulates its cellular localization, promoting NUMB localization to endosomes. Binds to and stabilizes the activated form of NOTCH1, increases its localization in endosomes and regulates its transcriptional activity. This Mus musculus (Mouse) protein is AP2-associated protein kinase 1 (Aak1).